Reading from the N-terminus, the 718-residue chain is Methionine--tRNA ligase (718 aa).

Residues 27-37 (PYANGQIHIGH) carry the 'HIGH' region motif. Residues Cys158, Cys161, Cys171, and Cys174 each coordinate Zn(2+). A 'KMSKS' region motif is present at residues 348–352 (KMSKS). Lys351 contacts ATP. Residues 612-718 (DFAKIDLRIA…SGAKPGMRVK (107 aa)) enclose the tRNA-binding domain.

This sequence belongs to the class-I aminoacyl-tRNA synthetase family. MetG type 1 subfamily. In terms of assembly, homodimer. Zn(2+) serves as cofactor.

The protein localises to the cytoplasm. It carries out the reaction tRNA(Met) + L-methionine + ATP = L-methionyl-tRNA(Met) + AMP + diphosphate. Functionally, is required not only for elongation of protein synthesis but also for the initiation of all mRNA translation through initiator tRNA(fMet) aminoacylation. This chain is Methionine--tRNA ligase, found in Burkholderia thailandensis (strain ATCC 700388 / DSM 13276 / CCUG 48851 / CIP 106301 / E264).